The following is a 599-amino-acid chain: THO complex subunit 1 (599 aa).

Disordered stretches follow at residues 376-395 (EKQPIDKKSPNAGQKKRRQR) and 497-599 (KYQA…MPVS). Basic and acidic residues predominate over residues 502 to 522 (PNEKAKRAKKEETKGGSHETE). Residues 575–585 (QIEDGETEEAG) are compositionally biased toward acidic residues.

As to quaternary structure, component of the THO complex, which is composed of THO1, THO2, THO3, THO5, THO6 and THO7.

It localises to the nucleus. Its function is as follows. Acts as a component of the THO subcomplex of the TREX complex which is thought to couple mRNA transcription, processing and nuclear export. Contributes to the integrity of the endogenous trans-acting small interfering RNA (ta-siRNA) pathway. May process or transport a long RNA molecule so that it can be a template for secondary siRNA production. May participate in the trafficking of siRNA precursors to the ARGONAUTE catalytic center. Required for the generation of functional messenger ribonucleoproteins (mRNPs). Plays an important roles in plant innate immunity. In Arabidopsis thaliana (Mouse-ear cress), this protein is THO complex subunit 1 (THO1).